The following is a 58-amino-acid chain: Large ribosomal subunit protein bL32 (58 aa).

The protein belongs to the bacterial ribosomal protein bL32 family.

The protein is Large ribosomal subunit protein bL32 of Limosilactobacillus fermentum (strain NBRC 3956 / LMG 18251) (Lactobacillus fermentum).